The following is a 675-amino-acid chain: DNA ligase 1 (675 aa).

NAD(+)-binding positions include 34 to 38, 83 to 84, and glutamate 114; these read DFEYD and SL. Lysine 116 (N6-AMP-lysine intermediate) is an active-site residue. NAD(+)-binding residues include arginine 137, glutamate 177, lysine 295, and lysine 319. Zn(2+) contacts are provided by cysteine 413, cysteine 416, cysteine 431, and cysteine 436. One can recognise a BRCT domain in the interval 596-675; sequence NSGSALAGKT…AEFLRLLSGG (80 aa).

Belongs to the NAD-dependent DNA ligase family. LigA subfamily. Requires Mg(2+) as cofactor. Mn(2+) is required as a cofactor.

It catalyses the reaction NAD(+) + (deoxyribonucleotide)n-3'-hydroxyl + 5'-phospho-(deoxyribonucleotide)m = (deoxyribonucleotide)n+m + AMP + beta-nicotinamide D-nucleotide.. DNA ligase that catalyzes the formation of phosphodiester linkages between 5'-phosphoryl and 3'-hydroxyl groups in double-stranded DNA using NAD as a coenzyme and as the energy source for the reaction. It is essential for DNA replication and repair of damaged DNA. The sequence is that of DNA ligase 1 from Opitutus terrae (strain DSM 11246 / JCM 15787 / PB90-1).